A 205-amino-acid polypeptide reads, in one-letter code: RNA pyrophosphohydrolase (205 aa).

Residues 6–149 (GFRPNVGIVL…KRGVYARALR (144 aa)) form the Nudix hydrolase domain. The Nudix box signature appears at 38–59 (GGMNTDETPVEAMYRELREETG). Residues 177–205 (PGSSAAGHDSPRKRPRKRSGARPMRINND) form a disordered region. Basic residues predominate over residues 187-196 (PRKRPRKRSG).

Belongs to the Nudix hydrolase family. RppH subfamily. A divalent metal cation is required as a cofactor.

In terms of biological role, accelerates the degradation of transcripts by removing pyrophosphate from the 5'-end of triphosphorylated RNA, leading to a more labile monophosphorylated state that can stimulate subsequent ribonuclease cleavage. The chain is RNA pyrophosphohydrolase from Xanthomonas oryzae pv. oryzae (strain MAFF 311018).